A 187-amino-acid chain; its full sequence is Large ribosomal subunit protein bL25 (187 aa).

This sequence belongs to the bacterial ribosomal protein bL25 family. CTC subfamily. Part of the 50S ribosomal subunit; part of the 5S rRNA/L5/L18/L25 subcomplex. Contacts the 5S rRNA. Binds to the 5S rRNA independently of L5 and L18.

This is one of the proteins that binds to the 5S RNA in the ribosome where it forms part of the central protuberance. This is Large ribosomal subunit protein bL25 from Tropheryma whipplei (strain Twist) (Whipple's bacillus).